An 85-amino-acid polypeptide reads, in one-letter code: MKVTLIAIVTCAAVLVLHTTAAEELEAESQLMEVGMPDTELAAVDEERLFECSASCEIEKEGNKDCKKKKCKGGWKCKFNMCVKV.

Positions 1-22 (MKVTLIAIVTCAAVLVLHTTAA) are cleaved as a signal peptide. Residues 23 to 48 (EELEAESQLMEVGMPDTELAAVDEER) constitute a propeptide that is removed on maturation. Intrachain disulfides connect C52-C66, C56-C77, and C71-C82.

Belongs to the neurotoxin 12 (Hwtx-2) family. 02 (Hwtx-2) subfamily. In terms of tissue distribution, expressed by the venom gland.

The protein resides in the secreted. In terms of biological role, postsynaptic neurotoxin. The sequence is that of U4-theraphotoxin-Hhn1c from Cyriopagopus hainanus (Chinese bird spider).